The following is a 494-amino-acid chain: Glutamate--tRNA ligase (494 aa).

A 'HIGH' region motif is present at residues 9 to 19 (PSPTGDPHLGT). Positions 250–254 (KLSKR) match the 'KMSKS' region motif. K253 contacts ATP.

It belongs to the class-I aminoacyl-tRNA synthetase family. Glutamate--tRNA ligase type 1 subfamily. As to quaternary structure, monomer.

It localises to the cytoplasm. It carries out the reaction tRNA(Glu) + L-glutamate + ATP = L-glutamyl-tRNA(Glu) + AMP + diphosphate. Functionally, catalyzes the attachment of glutamate to tRNA(Glu) in a two-step reaction: glutamate is first activated by ATP to form Glu-AMP and then transferred to the acceptor end of tRNA(Glu). This is Glutamate--tRNA ligase from Pseudoalteromonas translucida (strain TAC 125).